Consider the following 348-residue polypeptide: MSHEKSFLVSGDSYPPPNPGYPVGPQAPMPPYVQPPYPGAPYPQAAFQPSPYGQPGYPHGPGPYPQGGYPQGPYPQGGYPQGPYPQSPFPPNPYGQPPPFQDPGSPQHGNYQEEGPPSYYDNQDFPSVNWDKSIRQAFIRKVFLVLTLQLSVTLSTVAIFTFVGEVKGFVRANVWTYYVSYAIFFISLIVLSCCGDFRRKHPWNLVALSILTISLSYMVGMIASFYNTEAVIMAVGITTAVCFTVVIFSMQTRYDFTSCMGVLLVSVVVLFIFAILCIFIRNRILEIVYASLGALLFTCFLAVDTQLLLGNKQLSLSPEEYVFAALNLYTDIINIFLYILTIIGRAKE.

A disordered region spans residues 1 to 118 (MSHEKSFLVS…GNYQEEGPPS (118 aa)). Residues 14 to 41 (YPPPNPGYPVGPQAPMPPYVQPPYPGAP) are compositionally biased toward pro residues. The span at 42 to 57 (YPQAAFQPSPYGQPGY) shows a compositional bias: low complexity. The span at 82–101 (GPYPQSPFPPNPYGQPPPFQ) shows a compositional bias: pro residues. The next 7 membrane-spanning stretches (helical) occupy residues 142-162 (VFLV…IFTF), 174-194 (VWTY…LSCC), 205-225 (LVAL…IASF), 230-250 (AVIM…IFSM), 260-280 (MGVL…CIFI), 284-304 (ILEI…LAVD), and 323-343 (FAAL…LTII).

Belongs to the BI1 family. LFG subfamily.

The protein resides in the membrane. Its function is as follows. Potential apoptotic regulator. The sequence is that of Protein lifeguard 1 (Grina) from Rattus norvegicus (Rat).